Here is a 501-residue protein sequence, read N- to C-terminus: Zinc finger and SCAN domain-containing protein 12 (501 aa).

Glycyl lysine isopeptide (Lys-Gly) (interchain with G-Cter in SUMO2) cross-links involve residues lysine 20 and lysine 26. Residues 51–132 (QFCYQETSGP…DLERELDELG (82 aa)) form the SCAN box domain. The tract at residues 175–194 (REAQEEQVSGVETGNEPRNV) is disordered. Positions 180–194 (EQVSGVETGNEPRNV) are enriched in polar residues. Lysine 197 participates in a covalent cross-link: Glycyl lysine isopeptide (Lys-Gly) (interchain with G-Cter in SUMO2). The interval 223 to 255 (EAHNPGEESSGISHEDSQPLRNENGVNSPANSE) is disordered. A compositionally biased stretch (polar residues) spans 241–253 (PLRNENGVNSPAN). 6 C2H2-type zinc fingers span residues 269 to 291 (HGCD…KRVH), 297 to 319 (YKCE…KVVH), 325 to 347 (YKCN…QRLH), 353 to 375 (YHCN…LKSH), 381 to 403 (YQCL…QGVH), and 409 to 431 (YECN…QETH). The disordered stretch occupies residues 429-450 (ETHHKEKPFTQSGPIQQQRNHT). Polar residues predominate over residues 437–447 (FTQSGPIQQQR). Residues 455–477 (YKCSVCGKAFIQKISLIEHEQIH) form a C2H2-type 7 zinc finger. The C2H2-type 8; degenerate zinc finger occupies 483-501 (YKCAEGGKAFIQMSELTEH).

It belongs to the krueppel C2H2-type zinc-finger protein family. As to expression, testis specific.

The protein localises to the nucleus. May be involved in transcriptional regulation. The sequence is that of Zinc finger and SCAN domain-containing protein 12 (Zscan12) from Mus musculus (Mouse).